The primary structure comprises 666 residues: uncharacterized protein (666 aa).

This is an uncharacterized protein from Acanthamoeba polyphaga mimivirus (APMV).